Here is a 145-residue protein sequence, read N- to C-terminus: D-aminoacyl-tRNA deacylase (145 aa).

The Gly-cisPro motif, important for rejection of L-amino acids motif lies at 137-138 (GP).

Belongs to the DTD family. As to quaternary structure, homodimer.

It localises to the cytoplasm. It catalyses the reaction glycyl-tRNA(Ala) + H2O = tRNA(Ala) + glycine + H(+). It carries out the reaction a D-aminoacyl-tRNA + H2O = a tRNA + a D-alpha-amino acid + H(+). Functionally, an aminoacyl-tRNA editing enzyme that deacylates mischarged D-aminoacyl-tRNAs. Also deacylates mischarged glycyl-tRNA(Ala), protecting cells against glycine mischarging by AlaRS. Acts via tRNA-based rather than protein-based catalysis; rejects L-amino acids rather than detecting D-amino acids in the active site. By recycling D-aminoacyl-tRNA to D-amino acids and free tRNA molecules, this enzyme counteracts the toxicity associated with the formation of D-aminoacyl-tRNA entities in vivo and helps enforce protein L-homochirality. This chain is D-aminoacyl-tRNA deacylase, found in Psychromonas ingrahamii (strain DSM 17664 / CCUG 51855 / 37).